The sequence spans 264 residues: Somatomedin-B and thrombospondin type-1 domain-containing protein (264 aa).

The signal sequence occupies residues 1–20 (MRTLWMALCVLARLWPGALA). Residues 24–75 (DAGRCCPGRDPACFASGWRQDRVYGTCFCDQACRLTGDCCFDYARACPARPC) enclose the SMB domain. Cystine bridges form between cysteine 28/cysteine 36, cysteine 28/cysteine 52, cysteine 36/cysteine 70, cysteine 50/cysteine 52, cysteine 50/cysteine 63, cysteine 56/cysteine 62, and cysteine 63/cysteine 70. The TSP type-1 domain maps to 74 to 127 (PCIVGEWSPWSGCASQCRPTARVRRRAVQQEPQNGGEPCPALEERAGCLEYATP). Residue asparagine 227 is glycosylated (N-linked (GlcNAc...) asparagine).

The protein belongs to the thrombospondin family.

It is found in the secreted. Its subcellular location is the extracellular space. The protein resides in the extracellular matrix. In Bos taurus (Bovine), this protein is Somatomedin-B and thrombospondin type-1 domain-containing protein (SBSPON).